Reading from the N-terminus, the 403-residue chain is Zinc finger HIT domain-containing protein 2 (403 aa).

At M1 the chain carries N-acetylmethionine. Zn(2+) contacts are provided by C7, C10, C22, C25, C30, C34, H38, and C41. The segment at 7-41 adopts an HIT-type zinc-finger fold; that stretch reads CGFCPAGEVQPARYTCPRCNAPYCSLRCYRTHGTC. The interval 72-98 is disordered; the sequence is RQQRETEDEPGEAGLSSGPAPGGLSGL. A Phosphothreonine modification is found at T161.

In terms of assembly, interacts (via HIT-type zinc finger) with RUVBL2 in the presence of ATP or ADP; shows a stronger interaction in the presence of ADP. Low expression in most tissues; highly expressed in testis.

In terms of biological role, may act as a bridging factor mediating the interaction between the R2TP/Prefoldin-like (R2TP/PFDL) complex and U5 small nuclear ribonucleoprotein (U5 snRNP). Required for the interaction of R2TP complex subunit RPAP3 and prefoldin-like subunit URI1 with U5 snRNP proteins EFTUD2 and PRPF8. May play a role in regulating the composition of the U5 snRNP complex. In Homo sapiens (Human), this protein is Zinc finger HIT domain-containing protein 2 (ZNHIT2).